We begin with the raw amino-acid sequence, 365 residues long: Alanine racemase (365 aa).

Lys32 functions as the Proton acceptor; specific for D-alanine in the catalytic mechanism. Lys32 bears the N6-(pyridoxal phosphate)lysine mark. Substrate is bound at residue Arg128. The active-site Proton acceptor; specific for L-alanine is Tyr257. Residue Met305 participates in substrate binding.

It belongs to the alanine racemase family. The cofactor is pyridoxal 5'-phosphate.

It carries out the reaction L-alanine = D-alanine. It functions in the pathway amino-acid biosynthesis; D-alanine biosynthesis; D-alanine from L-alanine: step 1/1. Its function is as follows. Catalyzes the interconversion of L-alanine and D-alanine. May also act on other amino acids. The polypeptide is Alanine racemase (alr) (Francisella philomiragia subsp. philomiragia (strain ATCC 25017 / CCUG 19701 / FSC 153 / O#319-036)).